The sequence spans 294 residues: S-adenosylmethionine uptake transporter (294 aa).

10 helical membrane-spanning segments follow: residues 8–28 (YLTG…NDVI), 41–61 (VAFF…VYYG), 74–91 (ILRG…TYGL), 98–118 (TATV…VFFL), 121–141 (NIIW…VVTL), 148–168 (FNPE…LDII), 177–197 (SMIS…LPVA), 207–227 (FELA…FFLL), 237–257 (ATAP…YFIF), and 260–280 (FPDK…LFII). EamA domains lie at 21–141 (SSSA…VVTL) and 160–280 (ISFA…LFII).

The protein belongs to the drug/metabolite transporter (DMT) superfamily. 10 TMS drug/metabolite exporter (DME) (TC 2.A.7.3) family.

Its subcellular location is the cell inner membrane. Transports S-adenosylmethionine. The protein is S-adenosylmethionine uptake transporter (sam) of Rickettsia conorii (strain ATCC VR-613 / Malish 7).